We begin with the raw amino-acid sequence, 209 residues long: MDFYYLPGSAPCRAVQMTAAAVGVELNLKLTDLMKGEHMKPEFLKLNPQHCIPTLVDNGFALWESRAIQIYLAEKYGKDDKLYPKDPQKRAVVNQRLYFDMGTLYQRFADYHYPQIFAKQPANPENEKKMKDAVGFLNTFLEGQEYAAGNDLTIADLSLAATIATYEVAGFDFAPYPNVAAWFARCKANAPGYALNQAGADEFKAKFLS.

Residues 1–80 (MDFYYLPGSA…YLAEKYGKDD (80 aa)) enclose the GST N-terminal domain. Glutathione-binding positions include Ser9, 50 to 52 (HCI), and 64 to 66 (ESR). Residues 86–207 (DPQKRAVVNQ…AGADEFKAKF (122 aa)) form the GST C-terminal domain.

The protein belongs to the GST superfamily. Theta family. Homodimer.

It catalyses the reaction RX + glutathione = an S-substituted glutathione + a halide anion + H(+). The enzyme catalyses 1,1,1-trichloro-2,2-bis(4-chlorophenyl)ethane = 1,1-dichloro-2,2-bis(4-chlorophenyl)ethylene + chloride + H(+). With respect to regulation, inhibited by S-hexylglutathione. Its function is as follows. Conjugation of reduced glutathione to a wide number of exogenous and endogenous hydrophobic electrophiles. Has DDT dehydrochlorinase activity. The protein is Glutathione S-transferase 1, isoform D (GstD1) of Anopheles gambiae (African malaria mosquito).